Reading from the N-terminus, the 341-residue chain is Farnesyl pyrophosphate synthase 2 (341 aa).

The isopentenyl diphosphate site is built by K46, R49, and Q85. Mg(2+) contacts are provided by D92 and D96. R101 serves as a coordination point for dimethylallyl diphosphate. Position 102 (R102) interacts with isopentenyl diphosphate. Dimethylallyl diphosphate contacts are provided by K189, T190, Q228, K245, and K254.

Belongs to the FPP/GGPP synthase family. Mg(2+) serves as cofactor. In terms of tissue distribution, mainly expressed in trichomes, roots and flowers, and, to a lower extent, in leaves and stems.

It is found in the cytoplasm. The protein resides in the nucleus. It carries out the reaction isopentenyl diphosphate + dimethylallyl diphosphate = (2E)-geranyl diphosphate + diphosphate. The enzyme catalyses isopentenyl diphosphate + (2E)-geranyl diphosphate = (2E,6E)-farnesyl diphosphate + diphosphate. It functions in the pathway isoprenoid biosynthesis; farnesyl diphosphate biosynthesis; farnesyl diphosphate from geranyl diphosphate and isopentenyl diphosphate: step 1/1. It participates in sesquiterpene biosynthesis. Its pathway is isoprenoid biosynthesis; geranyl diphosphate biosynthesis; geranyl diphosphate from dimethylallyl diphosphate and isopentenyl diphosphate: step 1/1. Catalyzes the sequential condensation of isopentenyl pyrophosphate with the allylic pyrophosphates, dimethylallyl pyrophosphate, and then with the resultant geranylpyrophosphate to the ultimate product farnesyl pyrophosphate. In Cannabis sativa (Hemp), this protein is Farnesyl pyrophosphate synthase 2.